The primary structure comprises 179 residues: Endoribonuclease YbeY (179 aa).

Zn(2+) contacts are provided by His-148, His-152, and His-158.

It belongs to the endoribonuclease YbeY family. Zn(2+) is required as a cofactor.

It localises to the cytoplasm. Functionally, single strand-specific metallo-endoribonuclease involved in late-stage 70S ribosome quality control and in maturation of the 3' terminus of the 16S rRNA. The polypeptide is Endoribonuclease YbeY (Prochlorococcus marinus (strain MIT 9312)).